Reading from the N-terminus, the 997-residue chain is NLR family CARD domain-containing protein 4 (997 aa).

One can recognise a CARD domain in the interval 1 to 88 (MDLIRKNYAE…FFYEDLIGQR (88 aa)). The tract at residues 95–300 (EEDLENLADH…RCGALIAETS (206 aa)) is nucleotide-binding domain (NBD). The 314-residue stretch at 165-478 (SPCVIEGEAG…VTKGEDFLNK (314 aa)) folds into the NACHT domain. Residue 171-178 (GEAGKGKT) participates in ATP binding. The tract at residues 358–465 (MNTQTTLFST…RLSQLLSSED (108 aa)) is winged-helix domain (WHD). 12 LRR repeats span residues 550–570 (LFSEKCLYINSHNISSHHIEF), 629–652 (NQSIQTLEVTLRDFHQLNKKDIKY), 708–731 (MTEMKTLSILNLHSEHLQGGLLEG), 735–758 (LVGLEKLVFHNIKIDKNDAKTLAE), 760–785 (ILSLKKLKRLSISHISNIGDGMESIA), 797–820 (ELKLIDCCLSAKALRSLGQSLYSL), 821–843 (SHIEILDLSGNYLLEEGKESVEE), 851–875 (LDAIRTLMLPGGTDVKFCLEAVLPT), 884–905 (ELAFKRWNLTNDDLMTLASYIN), 908–935 (FENLSFLDLSDNCAQSAGWLSLTAILQY), 937–958 (PNLTYVNFSTEDLFTPDPDLVR), and 972–994 (TMELNNWQLDDFDLAQIKKAKNM).

It localises to the cytoplasm. The protein localises to the cytosol. Functionally, key component of inflammasomes that indirectly senses specific proteins from pathogenic bacteria and fungi and responds by assembling an inflammasome complex that promotes caspase-1 activation, cytokine production and macrophage pyroptosis. The chain is NLR family CARD domain-containing protein 4 (nlrc4) from Xenopus tropicalis (Western clawed frog).